The chain runs to 1107 residues: Protein translocase subunit SecA (1107 aa).

ATP contacts are provided by residues glutamine 169, 187–191 (GEGKT), and aspartate 688. A compositionally biased stretch (basic and acidic residues) spans 1036 to 1066 (RHAAEQRTDMSKYRTQKDDIEAQQKAQRDAA). The segment at 1036 to 1107 (RHAAEQRTDM…KFKQCHGRNL (72 aa)) is disordered. 4 residues coordinate Zn(2+): cysteine 1091, cysteine 1093, cysteine 1102, and histidine 1103. Residues 1097–1107 (KKFKQCHGRNL) show a composition bias toward basic residues.

The protein belongs to the SecA family. Monomer and homodimer. Part of the essential Sec protein translocation apparatus which comprises SecA, SecYEG and auxiliary proteins SecDF. Other proteins may also be involved. The cofactor is Zn(2+).

It is found in the cell inner membrane. The protein localises to the cytoplasm. The catalysed reaction is ATP + H2O + cellular proteinSide 1 = ADP + phosphate + cellular proteinSide 2.. In terms of biological role, part of the Sec protein translocase complex. Interacts with the SecYEG preprotein conducting channel. Has a central role in coupling the hydrolysis of ATP to the transfer of proteins into and across the cell membrane, serving as an ATP-driven molecular motor driving the stepwise translocation of polypeptide chains across the membrane. This Porphyromonas gingivalis (strain ATCC BAA-308 / W83) protein is Protein translocase subunit SecA.